The following is a 1097-amino-acid chain: Leukemia inhibitory factor receptor (1097 aa).

A signal peptide spans 1–44 (MMNISLRLRRPPWMVDSNGRRMTSHFQWLLLTFILLYLMNQVTS). At 45 to 833 (EKRGAPRDLK…SMFVVTKENS (789 aa)) the chain is on the extracellular side. In terms of domain architecture, Fibronectin type-III 1 spans 46–131 (KRGAPRDLKC…ISKFTLNEKN (86 aa)). Intrachain disulfides connect Cys55/Cys65 and Cys82/Cys90. 6 N-linked (GlcNAc...) asparagine glycosylation sites follow: Asn85, Asn131, Asn143, Asn191, Asn243, and Asn303. Cysteines 213 and 270 form a disulfide. Fibronectin type-III domains follow at residues 332-434 (PPDI…VYPR), 435-534 (IPTS…TEAI), 538-629 (GPDT…IPND), 627-719 (PNDD…IGYI), and 724-833 (PIVA…KENS). Cys341 and Cys351 are disulfide-bonded. N-linked (GlcNAc...) asparagine glycans are attached at residues Asn366, Asn390, Asn407, Asn426, Asn445, Asn471, Asn481, and Asn489. A disulfide bridge links Cys466 with Cys511. The short motif at 519–523 (WSKWS) is the WSXWS motif element. N-linked (GlcNAc...) asparagine glycosylation is found at Asn572, Asn652, Asn663, Asn680, Asn729, and Asn787. The chain crosses the membrane as a helical span at residues 834–854 (VGLIIAILIPVAVAVIVGVVT). Topologically, residues 855 to 1097 (SILCYRKREW…TNFFQNKPND (243 aa)) are cytoplasmic. Positions 869 to 877 (FYPDIPNPE) match the Box 1 motif motif. The residue at position 927 (Ser927) is a Phosphoserine. Disordered stretches follow at residues 982 to 1005 (QPQA…KPQM) and 1022 to 1097 (LDKA…KPND). 2 stretches are compositionally biased toward polar residues: residues 1032–1067 (ANVN…NSRQ) and 1086–1097 (SFTNFFQNKPND). Ser1044 bears the Phosphoserine mark.

The protein belongs to the type I cytokine receptor family. Type 2 subfamily. Heterodimer composed of LIFR and IL6ST. The heterodimer formed by LIFR and IL6ST interacts with the complex formed by CNTF and CNTFR.

It localises to the cell membrane. Signal-transducing molecule. May have a common pathway with IL6ST. The soluble form inhibits the biological activity of LIF by blocking its binding to receptors on target cells. The polypeptide is Leukemia inhibitory factor receptor (LIFR) (Canis lupus familiaris (Dog)).